The sequence spans 271 residues: Tryptophan synthase alpha chain (271 aa).

Active-site proton acceptor residues include Glu-49 and Asp-60.

This sequence belongs to the TrpA family. Tetramer of two alpha and two beta chains.

It carries out the reaction (1S,2R)-1-C-(indol-3-yl)glycerol 3-phosphate + L-serine = D-glyceraldehyde 3-phosphate + L-tryptophan + H2O. Its pathway is amino-acid biosynthesis; L-tryptophan biosynthesis; L-tryptophan from chorismate: step 5/5. Its function is as follows. The alpha subunit is responsible for the aldol cleavage of indoleglycerol phosphate to indole and glyceraldehyde 3-phosphate. The polypeptide is Tryptophan synthase alpha chain (Burkholderia cenocepacia (strain ATCC BAA-245 / DSM 16553 / LMG 16656 / NCTC 13227 / J2315 / CF5610) (Burkholderia cepacia (strain J2315))).